A 232-amino-acid chain; its full sequence is Enolase-phosphatase E1 (232 aa).

It belongs to the HAD-like hydrolase superfamily. MasA/MtnC family. As to quaternary structure, monomer. It depends on Mg(2+) as a cofactor.

It catalyses the reaction 5-methylsulfanyl-2,3-dioxopentyl phosphate + H2O = 1,2-dihydroxy-5-(methylsulfanyl)pent-1-en-3-one + phosphate. Its pathway is amino-acid biosynthesis; L-methionine biosynthesis via salvage pathway; L-methionine from S-methyl-5-thio-alpha-D-ribose 1-phosphate: step 3/6. It participates in amino-acid biosynthesis; L-methionine biosynthesis via salvage pathway; L-methionine from S-methyl-5-thio-alpha-D-ribose 1-phosphate: step 4/6. Functionally, bifunctional enzyme that catalyzes the enolization of 2,3-diketo-5-methylthiopentyl-1-phosphate (DK-MTP-1-P) into the intermediate 2-hydroxy-3-keto-5-methylthiopentenyl-1-phosphate (HK-MTPenyl-1-P), which is then dephosphorylated to form the acireductone 1,2-dihydroxy-3-keto-5-methylthiopentene (DHK-MTPene). In Xanthomonas axonopodis pv. citri (strain 306), this protein is Enolase-phosphatase E1.